Here is a 43-residue protein sequence, read N- to C-terminus: Photosystem I reaction center subunit IX (43 aa).

A helical transmembrane segment spans residues 7–27 (YLSVAPVLSALWFGALAGLLI).

Belongs to the PsaJ family.

It localises to the plastid. The protein resides in the chloroplast thylakoid membrane. Its function is as follows. May help in the organization of the PsaE and PsaF subunits. The protein is Photosystem I reaction center subunit IX of Oenothera argillicola (Appalachian evening primrose).